The chain runs to 233 residues: 3-dehydroquinate dehydratase (233 aa).

3-dehydroquinate-binding positions include 34 to 36 (ELR) and Arg-64. The active-site Proton donor/acceptor is His-118. Lys-145 serves as the catalytic Schiff-base intermediate with substrate. 3 residues coordinate 3-dehydroquinate: Arg-185, Ser-205, and Gln-209.

Belongs to the type-I 3-dehydroquinase family. Homodimer.

It carries out the reaction 3-dehydroquinate = 3-dehydroshikimate + H2O. It functions in the pathway metabolic intermediate biosynthesis; chorismate biosynthesis; chorismate from D-erythrose 4-phosphate and phosphoenolpyruvate: step 3/7. Involved in the third step of the chorismate pathway, which leads to the biosynthesis of aromatic amino acids. Catalyzes the cis-dehydration of 3-dehydroquinate (DHQ) and introduces the first double bond of the aromatic ring to yield 3-dehydroshikimate. The chain is 3-dehydroquinate dehydratase from Coxiella burnetii (strain CbuG_Q212) (Coxiella burnetii (strain Q212)).